A 1237-amino-acid polypeptide reads, in one-letter code: MEINRAEIRREITRYAGLIEQQTQINITDNDQDILKTLIADYNLRMRRDALLGELARLDELRDISQIKGDEYKLTIPLLPIISTLNQHEFEIIQANIETDFIADNVTFITSFIPADLDLEQTIQHVFFRTTATTPYFRSFNLVIAILDYDEDKGDVKLDVKITITRSNNGVFNYNYTWAGKDYERVSICYNLISYLQQINGPRGRDDEAEMPIYEIVRQNNGSQPSYASGEHLYIVSSHLHVDEIVRDREHRDISVDVTELNLMFPIVRMFDPVDLRDIRIEDVTPGIEFTINMEVSTYLTELSGSHVDTQRTIMNHAEKIVGNYTGQQWNVQSNMLSEVRTQKLEEEDEEARQRGDYTTSTLVQTMAQVSDLFSSTILYRYAEAELDNTVGAFELLRPVMSIPTEYIHDGRIGPITNISASASIVTSSNNGVGEVRNIFKPIGDQTINEAHFANVYSNDEYAIYLRFSYRQAPVQSETVYLQQALPSMRIVSPSSVSTTVSTALIGGNTIRINCPIRPHREDNFVAGGVQIPRQSTAVEIHVQEILIGYRQATTFPIDTEGRLSLELMYGLESRSAVGNTMSPVRFVTVNDGEFFGLTCPIDLTLSTIVDPASYLSDGVILVTTAFEDLRGYAWLATLGGDWPRTYNSSMGAFNIFTGGDINLSTEYGSEMTYTFKVELPINYMFNNMTISSHNVPRVPVLGVTYASIYQDSRTDLEARRFLQTLVFRIHGSWSARVPYPPGNLPTRNTANQHQDIQQVINDSIFQELDRLSDELLDLENRLDHLERQFEMFIQSQESEWWEILLNVVIDISIGYFSTFAGDALKNAQRAITKAVGYTRRVLMTVTKTMRNGTIFTRLLGAKNLSGQALASLETLVESALRSINMKKSRFMRGAEPLYKTNKVAQHIDNTEKMNMMMDFSFANRNNRQNITADTLSKMHTQNAHGTSDTILPAMRVYYRPLGFLDKRVGDALHTGITRPEALKKQLRSDVANVGTRAPSHAFMTYTDVLYEDAGSYIVSKRYLGIGELNKFGRTTSDKNAGIGGVNIKYRVNKITADGKYIIDRLDYTESGYTALDVDRLYSSLFGKQGDGLSTEQKWMDISKGVDAKIISADMVSEEFLSSKYTGQMIDELINSPPQFNYSLVYRNCQDFALDVLRVAQGFSPSNKWDVSTAARMQQRRVISLMDDLMGESETFARSGRASQLLLRQVRESYVKARKRGDLQAVKALQLRFKGFF.

One can recognise a PPPDE domain in the interval glycine 963–glutamine 1178. Catalysis depends on residues histidine 1001 and cysteine 1149.

The protein localises to the virion. The protein is Putative structural protein VP3 (S3) of Lymantria dispar cypovirus 1 (isolate Rao) (LdCPV-1).